The sequence spans 504 residues: MKMRPEEISSIIMKQIEQYNQEVQVVNFGTVFQVGDGIARIYGLEKVMAGELLEFEDGTIGIALNLEAKNVGAVLMGDGLKIKEGSKVRATGKVAQIAVGEGYLGRVVDSLARPIDGKGDIASDDTRLIESPAPGIISRRSVHEPLQTGLIAVDAMIPIGRGQRELIIGDRQTGKTAIAIDTILNQKGKNVICVYVAIGQKASSVAQVVNTLRERGALDYTVIVTANADSAATLQYLAPYTGATIAEYFMYTNRHTLVIYDDLSKQAQAYREMSLLLRRPPGREAYPGDVFYLHSRLLERAAKLNDALGSGSMTALPIVETQEGDVSAYIPTNVISITDGQIFLSADIFNSGVRPAINVGISVSRVGSAAQPKAMKQVAGSLKLQLAQFEELRAFSQFASDLDQATQNQLARGARLVEILKQAQNSPLGLAEQVASIYAGNNGYFDNLQVLQVRPFLIGLRQLLATKYSKYGEIVASAQTLTPEAETILKQAITEYLDEFGAKK.

Residue 169-176 (GDRQTGKT) coordinates ATP.

This sequence belongs to the ATPase alpha/beta chains family. F-type ATPases have 2 components, CF(1) - the catalytic core - and CF(0) - the membrane proton channel. CF(1) has five subunits: alpha(3), beta(3), gamma(1), delta(1), epsilon(1). CF(0) has four main subunits: a, b, b' and c.

It is found in the plastid. The protein localises to the chloroplast thylakoid membrane. It catalyses the reaction ATP + H2O + 4 H(+)(in) = ADP + phosphate + 5 H(+)(out). Functionally, produces ATP from ADP in the presence of a proton gradient across the membrane. The alpha chain is a regulatory subunit. The polypeptide is ATP synthase subunit alpha, chloroplastic (Stigeoclonium helveticum (Green alga)).